The following is a 298-amino-acid chain: GTP cyclohydrolase FolE2 (298 aa).

The protein belongs to the GTP cyclohydrolase IV family.

The enzyme catalyses GTP + H2O = 7,8-dihydroneopterin 3'-triphosphate + formate + H(+). It functions in the pathway cofactor biosynthesis; 7,8-dihydroneopterin triphosphate biosynthesis; 7,8-dihydroneopterin triphosphate from GTP: step 1/1. In terms of biological role, converts GTP to 7,8-dihydroneopterin triphosphate. The sequence is that of GTP cyclohydrolase FolE2 from Neisseria meningitidis serogroup A / serotype 4A (strain DSM 15465 / Z2491).